The primary structure comprises 308 residues: S-adenosylmethionine-dependent nucleotide dehydratase (308 aa).

The Radical SAM core domain maps to 7–253 (SIQELVINFH…WQSYLMINPE (247 aa)). Cys21, Cys25, and Cys28 together coordinate [4Fe-4S] cluster.

It belongs to the radical SAM superfamily. Viperin family. It depends on [4Fe-4S] cluster as a cofactor.

The enzyme catalyses CTP + AH2 + S-adenosyl-L-methionine = 3'-deoxy-3',4'-didehydro-CTP + 5'-deoxyadenosine + L-methionine + A + H2O + H(+). The catalysed reaction is GTP + AH2 + S-adenosyl-L-methionine = 3'-deoxy-3',4'-didehydro-GTP + 5'-deoxyadenosine + L-methionine + A + H2O + H(+). It carries out the reaction UTP + AH2 + S-adenosyl-L-methionine = 3'-deoxy-3',4'-didehydro-UTP + 5'-deoxyadenosine + L-methionine + A + H2O + H(+). Functionally, expression of pVip58 in E.coli (strain MG1655) confers resistance to phages lambda, P1 and T7; delays culture collapse upon infection with T7. Catalyzes the conversion of cytidine triphosphate (CTP) to 3'-deoxy-3',4'-didehydro-CTP (ddhCTP), guanosine triphosphate (GTP) to 3'-deoxy-3',4'-didehydro-GTP (ddhGTP) and uridine triphosphate (UTP) to 3'-deoxy-3',4'-didehydro-UTP (ddhUTP), probably via a SAM-dependent radical mechanism. The modified nucleotide represses transcription from T7 RNA polymerase-directed genes (possibly by acting as chain terminators), strongly suggesting these nucleotides block viral polymerase transcription. This is S-adenosylmethionine-dependent nucleotide dehydratase from Pseudoalteromonas ulvae.